The sequence spans 492 residues: FAD-linked oxidoreductase pgmH (492 aa).

An FAD-binding PCMH-type domain is found at Ser54–Gln224.

It belongs to the oxygen-dependent FAD-linked oxidoreductase family. FAD serves as cofactor.

Its pathway is pigment biosynthesis. It functions in the pathway secondary metabolite biosynthesis. Its function is as follows. FAD-linked oxidoreductase; part of the gene cluster that mediates the biosynthesis of pleosporalin A, ascomycone A, as well as a third cryptic naphthoquinone derived pigment, all responsible for the coloration of conidia. Essential for the production of pleosporalin A, but not the 2 other final products. The pathway begins with the biosynthesis of the cyclized heptaketide 3-acetonyl-1,6,8-trihydroxy-2-naphthaldehyde by the NR-PKS pgmA. The C-6 hydroxyl group is further methylated by the O-methyltransferase pgmB to yield fusarubinaldehyde which is in turn oxidized by the cytochrome P450 monooxygenase pgmC at C-9. The C-1 hydroxyl group is then methylated spontaneously. Although pgmE, pgmD and pgmH are essential for the production of pleosporalin A, it is not the case for the 2 other final products and it remains difficult to assign a specific function to each enzyme. PgmF and pgmG seem not to be involved in pigment biosynthesis although they were regulated by the cluster-specific transcription factor pgmR. This chain is FAD-linked oxidoreductase pgmH, found in Aspergillus terreus.